Here is a 148-residue protein sequence, read N- to C-terminus: Arginine repressor (148 aa).

It belongs to the ArgR family.

It localises to the cytoplasm. It functions in the pathway amino-acid biosynthesis; L-arginine biosynthesis [regulation]. Functionally, regulates arginine biosynthesis genes. The chain is Arginine repressor (argR) from Streptococcus pneumoniae serotype 4 (strain ATCC BAA-334 / TIGR4).